The chain runs to 424 residues: Histidine--tRNA ligase (424 aa).

Belongs to the class-II aminoacyl-tRNA synthetase family. In terms of assembly, homodimer.

It is found in the cytoplasm. The catalysed reaction is tRNA(His) + L-histidine + ATP = L-histidyl-tRNA(His) + AMP + diphosphate + H(+). The polypeptide is Histidine--tRNA ligase (Shewanella frigidimarina (strain NCIMB 400)).